We begin with the raw amino-acid sequence, 218 residues long: MSFWKVAAAQYEPRKTSLTEQVAHHLEFVRAAARQQCQLLVFPSLSLLGCDYSRRALPAPPDLSLLDPLCYAATTWRMTIIAGLPVEYNDRFIRGIAVFAPWRKTPGIYHQSHGACLGRRSRTITVVDEQPQGMDMDPTCSLFTTGQCLGEPDLLASARRLQFFSHQYSIAVLMANARGNSALWDEYGRLIVRADRGSLLLVGQRSSQGWQGDIIPLR.

The region spanning 4–207 (WKVAAAQYEP…SLLLVGQRSS (204 aa)) is the CN hydrolase domain.

This is an uncharacterized protein from Escherichia coli (strain K12).